The following is a 667-amino-acid chain: Bifunctional polymyxin resistance protein ArnA (667 aa).

Residues 1–304 (MKAIVFAYHD…EMGIVTDVRL (304 aa)) are formyltransferase ArnAFT. H104 serves as the catalytic Proton donor; for formyltransferase activity. Residues R114 and 136 to 140 (VKKAD) each bind (6R)-10-formyltetrahydrofolate. The tract at residues 314–667 (RRTRVLILGV…TAAPKDELNA (354 aa)) is dehydrogenase ArnADH. NAD(+)-binding positions include D347 and 368 to 369 (DI). Residues A393, Y398, and 432-433 (TS) contribute to the UDP-alpha-D-glucuronate site. E434 functions as the Proton acceptor; for decarboxylase activity in the catalytic mechanism. Residues R460, N492, 526 to 535 (KLVDGGAQKR), and Y613 contribute to the UDP-alpha-D-glucuronate site. Catalysis depends on R619, which acts as the Proton donor; for decarboxylase activity.

The protein in the N-terminal section; belongs to the Fmt family. UDP-L-Ara4N formyltransferase subfamily. This sequence in the C-terminal section; belongs to the NAD(P)-dependent epimerase/dehydratase family. UDP-glucuronic acid decarboxylase subfamily. Homohexamer, formed by a dimer of trimers.

It catalyses the reaction UDP-alpha-D-glucuronate + NAD(+) = UDP-beta-L-threo-pentopyranos-4-ulose + CO2 + NADH. The enzyme catalyses UDP-4-amino-4-deoxy-beta-L-arabinose + (6R)-10-formyltetrahydrofolate = UDP-4-deoxy-4-formamido-beta-L-arabinose + (6S)-5,6,7,8-tetrahydrofolate + H(+). It participates in nucleotide-sugar biosynthesis; UDP-4-deoxy-4-formamido-beta-L-arabinose biosynthesis; UDP-4-deoxy-4-formamido-beta-L-arabinose from UDP-alpha-D-glucuronate: step 1/3. Its pathway is nucleotide-sugar biosynthesis; UDP-4-deoxy-4-formamido-beta-L-arabinose biosynthesis; UDP-4-deoxy-4-formamido-beta-L-arabinose from UDP-alpha-D-glucuronate: step 3/3. It functions in the pathway bacterial outer membrane biogenesis; lipopolysaccharide biosynthesis. Functionally, bifunctional enzyme that catalyzes the oxidative decarboxylation of UDP-glucuronic acid (UDP-GlcUA) to UDP-4-keto-arabinose (UDP-Ara4O) and the addition of a formyl group to UDP-4-amino-4-deoxy-L-arabinose (UDP-L-Ara4N) to form UDP-L-4-formamido-arabinose (UDP-L-Ara4FN). The modified arabinose is attached to lipid A and is required for resistance to polymyxin and cationic antimicrobial peptides. This is Bifunctional polymyxin resistance protein ArnA from Yersinia pseudotuberculosis serotype IB (strain PB1/+).